Here is a 106-residue protein sequence, read N- to C-terminus: Guanylate cyclase activator 2B (106 aa).

The first 21 residues, 1-21 (MSRSQLWAAVVLLLLLQSAQG), serve as a signal peptide directing secretion. A propeptide spanning residues 22 to 91 (VYIKYHGFQV…STFKALRTIA (70 aa)) is cleaved from the precursor. 3 disulfides stabilise this stretch: Cys-62-Cys-75, Cys-95-Cys-103, and Cys-98-Cys-106.

It belongs to the guanylin family. In terms of tissue distribution, localized predominantly in intestinal villi and the corticomedullary junction of the kidney.

It is found in the secreted. In terms of biological role, endogenous activator of intestinal guanylate cyclase. It stimulates this enzyme through the same receptor binding region as the heat-stable enterotoxins. May be a potent physiological regulator of intestinal fluid and electrolyte transport. May be an autocrine/paracrine regulator of intestinal salt and water transport. The protein is Guanylate cyclase activator 2B (Guca2b) of Mus musculus (Mouse).